We begin with the raw amino-acid sequence, 502 residues long: Cobyric acid synthase (502 aa).

Positions Val260–Phe433 constitute a GATase cobBQ-type domain. Cys341 acts as the Nucleophile in catalysis. The active site involves His425.

Belongs to the CobB/CobQ family. CobQ subfamily.

The protein operates within cofactor biosynthesis; adenosylcobalamin biosynthesis. Functionally, catalyzes amidations at positions B, D, E, and G on adenosylcobyrinic A,C-diamide. NH(2) groups are provided by glutamine, and one molecule of ATP is hydrogenolyzed for each amidation. The polypeptide is Cobyric acid synthase (Streptomyces coelicolor (strain ATCC BAA-471 / A3(2) / M145)).